A 362-amino-acid chain; its full sequence is 4-hydroxy-3-methylbut-2-en-1-yl diphosphate synthase (flavodoxin) (362 aa).

Residues cysteine 266, cysteine 269, cysteine 301, and glutamate 308 each contribute to the [4Fe-4S] cluster site.

The protein belongs to the IspG family. It depends on [4Fe-4S] cluster as a cofactor.

It carries out the reaction (2E)-4-hydroxy-3-methylbut-2-enyl diphosphate + oxidized [flavodoxin] + H2O + 2 H(+) = 2-C-methyl-D-erythritol 2,4-cyclic diphosphate + reduced [flavodoxin]. The protein operates within isoprenoid biosynthesis; isopentenyl diphosphate biosynthesis via DXP pathway; isopentenyl diphosphate from 1-deoxy-D-xylulose 5-phosphate: step 5/6. Converts 2C-methyl-D-erythritol 2,4-cyclodiphosphate (ME-2,4cPP) into 1-hydroxy-2-methyl-2-(E)-butenyl 4-diphosphate. This chain is 4-hydroxy-3-methylbut-2-en-1-yl diphosphate synthase (flavodoxin), found in Malacoplasma penetrans (strain HF-2) (Mycoplasma penetrans).